The chain runs to 490 residues: Ribulose bisphosphate carboxylase large chain (490 aa).

Positions 127 and 177 each coordinate substrate. Lys-179 serves as the catalytic Proton acceptor. Lys-181 is a substrate binding site. Residues Lys-205, Asp-207, and Glu-208 each coordinate Mg(2+). Residue Lys-205 is modified to N6-carboxylysine. The Proton acceptor role is filled by His-297. Positions 298, 330, and 382 each coordinate substrate.

It belongs to the RuBisCO large chain family. Type I subfamily. Heterohexadecamer of 8 large chains and 8 small chains. The cofactor is Mg(2+).

The protein localises to the plastid. Its subcellular location is the chloroplast. It catalyses the reaction 2 (2R)-3-phosphoglycerate + 2 H(+) = D-ribulose 1,5-bisphosphate + CO2 + H2O. It carries out the reaction D-ribulose 1,5-bisphosphate + O2 = 2-phosphoglycolate + (2R)-3-phosphoglycerate + 2 H(+). RuBisCO catalyzes two reactions: the carboxylation of D-ribulose 1,5-bisphosphate, the primary event in carbon dioxide fixation, as well as the oxidative fragmentation of the pentose substrate in the photorespiration process. Both reactions occur simultaneously and in competition at the same active site. The chain is Ribulose bisphosphate carboxylase large chain from Cylindrotheca sp. (strain N1) (Marine diatom).